A 38-amino-acid chain; its full sequence is Large ribosomal subunit protein bL36 (38 aa).

The protein belongs to the bacterial ribosomal protein bL36 family.

This Prosthecochloris aestuarii (strain DSM 271 / SK 413) protein is Large ribosomal subunit protein bL36.